A 244-amino-acid polypeptide reads, in one-letter code: 15,16-dihydrobiliverdin:ferredoxin oxidoreductase (244 aa).

This sequence belongs to the HY2 family.

It carries out the reaction 15,16-dihydrobiliverdin + oxidized 2[4Fe-4S]-[ferredoxin] = biliverdin IXalpha + reduced 2[4Fe-4S]-[ferredoxin] + 2 H(+). Catalyzes the two-electron reduction of biliverdin IX-alpha at the C15 methine bridge. The protein is 15,16-dihydrobiliverdin:ferredoxin oxidoreductase (pebA) of Nostoc punctiforme (strain ATCC 29133 / PCC 73102).